Here is a 67-residue protein sequence, read N- to C-terminus: MAAKKGAKTSTKKSDYYKVEGNTVERLKKVCPKCGAGVFMAEHLNRFACGKCGYMEYKKNEKTESEE.

The Zn(2+) site is built by C31, C34, C49, and C52. The C4-type zinc finger occupies 31–52; the sequence is CPKCGAGVFMAEHLNRFACGKC.

The protein belongs to the eukaryotic ribosomal protein eS31 family. In terms of assembly, part of the 30S ribosomal subunit. Requires Zn(2+) as cofactor.

This chain is Small ribosomal subunit protein eS31, found in Methanococcus maripaludis (strain DSM 14266 / JCM 13030 / NBRC 101832 / S2 / LL).